A 149-amino-acid polypeptide reads, in one-letter code: Transcriptional repressor NrdR (149 aa).

A zinc finger spans residues 3 to 34; that stretch reads CPFCSAVDTKVIDSRLVAEGHQVRRRRECLLC. Residues 49 to 139 enclose the ATP-cone domain; it reads PRVIKSNGSR…VYRSFEDIRE (91 aa).

It belongs to the NrdR family. Zn(2+) serves as cofactor.

Functionally, negatively regulates transcription of bacterial ribonucleotide reductase nrd genes and operons by binding to NrdR-boxes. In Aeromonas salmonicida (strain A449), this protein is Transcriptional repressor NrdR.